Reading from the N-terminus, the 457-residue chain is Proton extrusion protein PxcA (457 aa).

4 helical membrane-spanning segments follow: residues 239-259, 332-352, 368-390, and 417-437; these read FILL…TFFL, INAI…GVVI, GILY…DMFV, and FNFL…KYWI.

The protein belongs to the CemA family.

It is found in the cell inner membrane. Required for H(+) efflux immediately after light irradiation to form a rapid H(+) concentration gradient across the thylakoid membranes. Together with PxcL, contributes to transient H(+) uptake following dark to light transition. The polypeptide is Proton extrusion protein PxcA (Gloeothece citriformis (strain PCC 7424) (Cyanothece sp. (strain PCC 7424))).